A 394-amino-acid polypeptide reads, in one-letter code: Protein arginine N-methyltransferase 8 (394 aa).

Gly2 is lipidated: N-myristoyl glycine. The interval 16–40 (MAENAAESTEVNSPPSQPPQPVVPA) is disordered. Short sequence motifs (SH3-binding) lie at residues 29–42 (PPSQPPQPVVPAKP) and 53–58 (PSCPGR). The span at 30-39 (PSQPPQPVVP) shows a compositional bias: pro residues. Arg58 carries the omega-N-methylarginine; by autocatalysis modification. Arg73 bears the Asymmetric dimethylarginine; by autocatalysis mark. Residues 73 to 394 (RDYYFDSYAH…TSVSNDYKMR (322 aa)) enclose the SAM-dependent MTase PRMT-type domain. Residues His86, Arg95, Gly119, 119 to 122 (GSGT), Glu141, and Glu170 each bind S-adenosyl-L-methionine. Active-site residues include Glu185 and Glu194.

This sequence belongs to the class I-like SAM-binding methyltransferase superfamily. Protein arginine N-methyltransferase family. PRMT8 subfamily. In terms of assembly, homodimer. Tetramer; individual homodimers associates to form a homotetramer. Homooctamer; individual homodimers associates to form a homooctamer and homooligomerization is required for proper localization to the cell membrane. Heterodimer with PRMT1; heterodimerization may recruit PRMT1 activity to the plasma membrane. Interacts with PRMT2 (via the SH3 domain). Interacts with FYN (via the SH3 domain). Interacts with EWS; independently of EWS methylation status. As to expression, brain-specific.

It localises to the cell membrane. It catalyses the reaction L-arginyl-[protein] + S-adenosyl-L-methionine = N(omega)-methyl-L-arginyl-[protein] + S-adenosyl-L-homocysteine + H(+). The catalysed reaction is L-arginyl-[protein] + 2 S-adenosyl-L-methionine = N(omega),N(omega)-dimethyl-L-arginyl-[protein] + 2 S-adenosyl-L-homocysteine + 2 H(+). Its function is as follows. S-adenosyl-L-methionine-dependent and membrane-associated arginine methyltransferase that can both catalyze the formation of omega-N monomethylarginine (MMA) and asymmetrical dimethylarginine (aDMA) in proteins such as NIFK, myelin basic protein, histone H4, H2A and H2A/H2B dimer. Able to mono- and dimethylate EWS protein; however its precise role toward EWS remains unclear as it still interacts with fully methylated EWS. The polypeptide is Protein arginine N-methyltransferase 8 (Homo sapiens (Human)).